The sequence spans 569 residues: F-box/WD repeat-containing protein 5 (569 aa).

In terms of domain architecture, F-box spans Glu-3 to Gln-49. Residues Glu-90 to His-129 form a WD 1 repeat. The residue at position 151 (Ser-151) is a Phosphoserine; by PLK4. Residues Arg-308 to Asp-316 carry the D-box motif. WD repeat units follow at residues Thr-470–Lys-509 and Arg-511–Gln-551.

It belongs to the FBXW5 family. Part of the SCF (SKP1-CUL1-F-box) E3 ubiquitin-protein ligase complex SCF(FBXW5) composed of CUL1, SKP1, RBX1 and FBXW5. Component of the DCX(FBXW5) E3 ubiquitin ligase complex, at least composed of (CUL4A or CUL4B), DDB1, FBXW5 and RBX1. Interacts with CDC20, EPS8, TSC1, TSC2 and SASS6. Interacts with TNFAIP8L1; TNFAIP8L1 competes with TSC2 to bind FBXW5 increasing TSC2 stability by preventing its ubiquitination. Post-translationally, phosphorylated at Ser-151 by PLK4 during the G1/S transition, leading to inhibit its ability to ubiquitinate SASS6. Ubiquitinated and degraded by the APC/C complex during mitosis and G1 phase.

It is found in the cytoplasm. It functions in the pathway protein modification; protein ubiquitination. Its function is as follows. Substrate recognition component of both SCF (SKP1-CUL1-F-box protein) and DCX (DDB1-CUL4-X-box) E3 ubiquitin-protein ligase complexes. Substrate recognition component of the SCF(FBXW5) E3 ubiquitin-protein ligase complex which mediates the ubiquitination and subsequent proteasomal degradation of SASS6 during S phase, leading to prevent centriole reduplication. The SCF(FBXW5) complex also mediates ubiquitination and degradation of actin-regulator EPS8 during G2 phase, leading to the transient degradation of EPS8 and subsequent cell shape changes required to allow mitotic progression. Substrate-specific adapter of the DCX(FBXW5) E3 ubiquitin-protein ligase complex which mediates the polyubiquitination and subsequent degradation of TSC2. May also act as a negative regulator of MAP3K7/TAK1 signaling in the interleukin-1B (IL1B) signaling pathway. The polypeptide is F-box/WD repeat-containing protein 5 (Fbxw5) (Rattus norvegicus (Rat)).